The sequence spans 68 residues: MIHPKKLLHIDSVTLKSQLEDGKIRVIIVDGIKQEAWITEAPEHGKTLVETRKGDLARVEFEIGYKLN.

The protein to B.subtilis YqaO.

The chain is Phage-like element PBSX protein XtrA (xtrA) from Bacillus subtilis (strain 168).